The sequence spans 126 residues: Aspartate 1-decarboxylase (126 aa).

The active-site Schiff-base intermediate with substrate; via pyruvic acid is the serine 25. Serine 25 is subject to Pyruvic acid (Ser). Threonine 57 serves as a coordination point for substrate. The active-site Proton donor is tyrosine 58. Residue 72–74 (GAT) coordinates substrate.

It belongs to the PanD family. In terms of assembly, heterooctamer of four alpha and four beta subunits. The cofactor is pyruvate. Is synthesized initially as an inactive proenzyme, which is activated by self-cleavage at a specific serine bond to produce a beta-subunit with a hydroxyl group at its C-terminus and an alpha-subunit with a pyruvoyl group at its N-terminus.

The protein resides in the cytoplasm. The enzyme catalyses L-aspartate + H(+) = beta-alanine + CO2. The protein operates within cofactor biosynthesis; (R)-pantothenate biosynthesis; beta-alanine from L-aspartate: step 1/1. Its function is as follows. Catalyzes the pyruvoyl-dependent decarboxylation of aspartate to produce beta-alanine. This is Aspartate 1-decarboxylase from Campylobacter jejuni subsp. doylei (strain ATCC BAA-1458 / RM4099 / 269.97).